A 97-amino-acid chain; its full sequence is Co-chaperonin GroES (97 aa).

Belongs to the GroES chaperonin family. In terms of assembly, heptamer of 7 subunits arranged in a ring. Interacts with the chaperonin GroEL.

It is found in the cytoplasm. Functionally, together with the chaperonin GroEL, plays an essential role in assisting protein folding. The GroEL-GroES system forms a nano-cage that allows encapsulation of the non-native substrate proteins and provides a physical environment optimized to promote and accelerate protein folding. GroES binds to the apical surface of the GroEL ring, thereby capping the opening of the GroEL channel. The sequence is that of Co-chaperonin GroES from Blochmanniella floridana.